Here is a 311-residue protein sequence, read N- to C-terminus: Forkhead box protein I2 (311 aa).

Positions 99–193 form a DNA-binding region, fork-head; that stretch reads RPPYSYSALI…DNGNFRRKRR (95 aa). Disordered regions lie at residues 188–237 and 263–294; these read FRRK…TTTC and FSLRRPPPTAAAHSPQIPNTAPGFAPGHQTGA. A compositionally biased stretch (low complexity) spans 219 to 231; sequence STPQDPQTSPSPS.

It is found in the nucleus. In terms of biological role, possible transcriptional activator. This Mus musculus (Mouse) protein is Forkhead box protein I2.